A 279-amino-acid polypeptide reads, in one-letter code: Large ribosomal subunit protein uL2 (279 aa).

The tract at residues 224-279 (AMNAVDHPMGGGRGHSKGGNIPRSPWNQPSRGLKTRPKKSWDWMIVSDRRKNKAGK) is disordered.

Belongs to the universal ribosomal protein uL2 family. In terms of assembly, part of the 50S ribosomal subunit. Forms a bridge to the 30S subunit in the 70S ribosome.

One of the primary rRNA binding proteins. Required for association of the 30S and 50S subunits to form the 70S ribosome, for tRNA binding and peptide bond formation. It has been suggested to have peptidyltransferase activity; this is somewhat controversial. Makes several contacts with the 16S rRNA in the 70S ribosome. This Elusimicrobium minutum (strain Pei191) protein is Large ribosomal subunit protein uL2.